A 216-amino-acid chain; its full sequence is Imidazole glycerol phosphate synthase subunit HisH 1 (216 aa).

One can recognise a Glutamine amidotransferase type-1 domain in the interval 4–216 (CVLIVDAGLG…LQNFIALNPC (213 aa)). The Nucleophile role is filled by Cys-84. Active-site residues include His-195 and Glu-197.

As to quaternary structure, heterodimer of HisH and HisF.

The protein resides in the cytoplasm. The enzyme catalyses 5-[(5-phospho-1-deoxy-D-ribulos-1-ylimino)methylamino]-1-(5-phospho-beta-D-ribosyl)imidazole-4-carboxamide + L-glutamine = D-erythro-1-(imidazol-4-yl)glycerol 3-phosphate + 5-amino-1-(5-phospho-beta-D-ribosyl)imidazole-4-carboxamide + L-glutamate + H(+). It carries out the reaction L-glutamine + H2O = L-glutamate + NH4(+). The protein operates within amino-acid biosynthesis; L-histidine biosynthesis; L-histidine from 5-phospho-alpha-D-ribose 1-diphosphate: step 5/9. In terms of biological role, IGPS catalyzes the conversion of PRFAR and glutamine to IGP, AICAR and glutamate. The HisH subunit provides the glutamine amidotransferase activity that produces the ammonia necessary to HisF for the synthesis of IGP and AICAR. This chain is Imidazole glycerol phosphate synthase subunit HisH 1 (hisH1), found in Prochlorococcus marinus (strain MIT 9313).